The sequence spans 721 residues: K(+)-insensitive pyrophosphate-energized proton pump (721 aa).

Helical transmembrane passes span 8–28 (LLGV…AVWV), 57–77 (YRTL…AIDM), 82–102 (FGLT…AGYL), 136–156 (VMGL…YLVF), and 168–188 (LVAL…GGGI). Lys-191 provides a ligand contact to substrate. The Mg(2+) site is built by Asp-194, Asp-198, Asn-221, and Asp-224. Helical transmembrane passes span 247 to 267 (AIFL…IILF), 294 to 314 (ISLA…IGAF), 323 to 343 (ALAL…IVKI), 374 to 394 (YGVG…VLGI), and 416 to 436 (AGIF…GIII). Position 446 (Asp-446) interacts with Mg(2+). Transmembrane regions (helical) follow at residues 483–503 (AIAS…FEIV), 527–547 (LINA…YFFS), 599–619 (FLIP…LLGW), and 621–641 (ALAG…LLMA). Residues Asp-648, Asp-672, and Asp-676 each contribute to the Ca(2+) site. Lys-679 contacts substrate. The helical transmembrane segment at 698-718 (VVFTYVIVSTNIALGIWPSGL) threads the bilayer.

This sequence belongs to the H(+)-translocating pyrophosphatase (TC 3.A.10) family. K(+)-insensitive subfamily. Homodimer. It depends on Mg(2+) as a cofactor.

The protein localises to the cell membrane. It catalyses the reaction diphosphate + H2O + H(+)(in) = 2 phosphate + 2 H(+)(out). Proton pump that utilizes the energy of pyrophosphate hydrolysis as the driving force for proton movement across the membrane. Generates a proton motive force. This chain is K(+)-insensitive pyrophosphate-energized proton pump, found in Pyrobaculum aerophilum (strain ATCC 51768 / DSM 7523 / JCM 9630 / CIP 104966 / NBRC 100827 / IM2).